Reading from the N-terminus, the 108-residue chain is UPF0102 protein Tpet_0671 (108 aa).

It belongs to the UPF0102 family.

In Thermotoga petrophila (strain ATCC BAA-488 / DSM 13995 / JCM 10881 / RKU-1), this protein is UPF0102 protein Tpet_0671.